Consider the following 173-residue polypeptide: Fimbrial protein PrsE (173 aa).

Residues 1-24 (MKKIRGLCLPVMLGAVLMSQHVHA) form the signal peptide.

It is found in the secreted. It localises to the fimbrium. In terms of biological role, fimbriae (also called pili), polar filaments radiating from the surface of the bacterium to a length of 0.5-1.5 micrometers and numbering 100-300 per cell, enable bacteria to colonize the epithelium of specific host organs. The sequence is that of Fimbrial protein PrsE (prsE) from Escherichia coli.